Reading from the N-terminus, the 204-residue chain is MPYTRHALREYERRSRVEQVLPPKADIFAWTRYAAPEDIKVVILGQDPYHSRGQAHGLAFSVNRGVPVPPSLQNIYAAVQKNFPGAPRPSHGCLEDWARRGVLLLNTSLTVRSGAPGSHSSLGWGRLVHAVLARLSAESGPLVFMLWGAHAQRAFGAAGKRHLVLTYSHPSPLSRAPFVHCTHFAEANAFLEQHGRGGVDWSIV.

Residue Asp-47 is the Proton acceptor of the active site.

The protein belongs to the uracil-DNA glycosylase (UDG) superfamily. UNG family.

The protein localises to the host nucleus. The catalysed reaction is Hydrolyzes single-stranded DNA or mismatched double-stranded DNA and polynucleotides, releasing free uracil.. Excises uracil residues from the DNA which can arise as a result of misincorporation of dUMP residues by DNA polymerase or deamination of cytosines. Therefore may reduce deleterious uracil incorporation into the viral genome, particularly in terminally differentiated cells which lack DNA repair enzymes. The protein is Uracil-DNA glycosylase (UL2) of Bos taurus (Bovine).